Reading from the N-terminus, the 307-residue chain is Transaldolase (307 aa).

The active-site Schiff-base intermediate with substrate is K125.

This sequence belongs to the transaldolase family. Type 1 subfamily.

Its subcellular location is the cytoplasm. It catalyses the reaction D-sedoheptulose 7-phosphate + D-glyceraldehyde 3-phosphate = D-erythrose 4-phosphate + beta-D-fructose 6-phosphate. It functions in the pathway carbohydrate degradation; pentose phosphate pathway; D-glyceraldehyde 3-phosphate and beta-D-fructose 6-phosphate from D-ribose 5-phosphate and D-xylulose 5-phosphate (non-oxidative stage): step 2/3. Functionally, transaldolase is important for the balance of metabolites in the pentose-phosphate pathway. This is Transaldolase from Pseudomonas aeruginosa (strain ATCC 15692 / DSM 22644 / CIP 104116 / JCM 14847 / LMG 12228 / 1C / PRS 101 / PAO1).